Reading from the N-terminus, the 87-residue chain is U3-theraphotoxin-Hhn1a 13 (87 aa).

Positions 1–24 (MVNMKASMFLTSAGLVPLFVVCYA) are cleaved as a signal peptide. The propeptide occupies 25-52 (SESEEKEFPKEMLSSIFAVDNDFKQEER). 3 disulfides stabilise this stretch: Cys54–Cys67, Cys61–Cys72, and Cys66–Cys79.

The protein belongs to the neurotoxin 10 (Hwtx-1) family. 51 (Hntx-8) subfamily. Hntx-8 sub-subfamily. As to expression, expressed by the venom gland.

It localises to the secreted. Its function is as follows. Ion channel inhibitor. The chain is U3-theraphotoxin-Hhn1a 13 from Cyriopagopus hainanus (Chinese bird spider).